The chain runs to 59 residues: Large ribosomal subunit protein uL30 (59 aa).

This sequence belongs to the universal ribosomal protein uL30 family. As to quaternary structure, part of the 50S ribosomal subunit.

This Desulfatibacillum aliphaticivorans protein is Large ribosomal subunit protein uL30.